We begin with the raw amino-acid sequence, 400 residues long: LIM homeobox transcription factor 1-beta.1 (400 aa).

2 LIM zinc-binding domains span residues Ala-54–Ala-113 and Lys-114–Leu-175. The interval Leu-175–Gln-228 is disordered. A DNA-binding region (homeobox) is located at residues Pro-218–Ala-277.

In terms of tissue distribution, shows a temporal expression pattern in three main areas: neural, kidney and limbs. From stage 13 onwards, expressed in regions of the nervous system including the placodes and otic vesicles, eye, specific sets of neurons, and in discreet regions of the neural tube. From stage 13, also expressed in the presumptive pronephros, and from stage 27 expression is predominant in the capsule of the pronephric glomus. Also expressed in the developing forelimbs and hindlimbs. In metamorphosing tadpoles, expressed in the eye, brain, muscle and mesonephric kidney.

It localises to the nucleus. Required for early specification of the kidney glomus, lying upstream of wt1 in the pathway controlling glomus differentiation. The balance in levels and expression patterns of binding partners such as lhx1/lim-1 influences differentiation into glomus or tubule derivatives. Involved in specification of serotonergic neurons. This chain is LIM homeobox transcription factor 1-beta.1, found in Xenopus laevis (African clawed frog).